The primary structure comprises 118 residues: Large ribosomal subunit protein uL22 (118 aa).

It belongs to the universal ribosomal protein uL22 family. Part of the 50S ribosomal subunit.

Its function is as follows. This protein binds specifically to 23S rRNA; its binding is stimulated by other ribosomal proteins, e.g. L4, L17, and L20. It is important during the early stages of 50S assembly. It makes multiple contacts with different domains of the 23S rRNA in the assembled 50S subunit and ribosome. Functionally, the globular domain of the protein is located near the polypeptide exit tunnel on the outside of the subunit, while an extended beta-hairpin is found that lines the wall of the exit tunnel in the center of the 70S ribosome. The protein is Large ribosomal subunit protein uL22 of Leuconostoc mesenteroides subsp. mesenteroides (strain ATCC 8293 / DSM 20343 / BCRC 11652 / CCM 1803 / JCM 6124 / NCDO 523 / NBRC 100496 / NCIMB 8023 / NCTC 12954 / NRRL B-1118 / 37Y).